The chain runs to 346 residues: Heterogeneous nuclear ribonucleoprotein A2 homolog 1 (346 aa).

2 RRM domains span residues 9–92 (RKLF…ESAK) and 100–179 (KKLF…LSKQ). 2 disordered regions span residues 182–217 (QDVQNTRNNRGGNFGFGDSRGGGNFGSGPGGNFRGG) and 326–346 (NYGPGNASGGNGGGYGGRNRY). The segment covering 193–217 (GNFGFGDSRGGGNFGSGPGGNFRGG) has biased composition (gly residues). The interval 297-340 (QQSSNYGPMKSGGNFGGNRSMGGGPYGGGNYGPGNASGGNGGGY) is nuclear targeting sequence.

The protein localises to the nucleus. Functionally, forms complexes (ribonucleosomes) with at least 20 other different hnRNP and heterogeneous nuclear RNA in the nucleus. The polypeptide is Heterogeneous nuclear ribonucleoprotein A2 homolog 1 (Xenopus laevis (African clawed frog)).